Reading from the N-terminus, the 152-residue chain is Ribosomal RNA large subunit methyltransferase H (152 aa).

Residues leucine 69, glycine 96, and 118-123 (FGKLTF) each bind S-adenosyl-L-methionine.

This sequence belongs to the RNA methyltransferase RlmH family. In terms of assembly, homodimer.

Its subcellular location is the cytoplasm. The enzyme catalyses pseudouridine(1915) in 23S rRNA + S-adenosyl-L-methionine = N(3)-methylpseudouridine(1915) in 23S rRNA + S-adenosyl-L-homocysteine + H(+). Its function is as follows. Specifically methylates the pseudouridine at position 1915 (m3Psi1915) in 23S rRNA. The polypeptide is Ribosomal RNA large subunit methyltransferase H (Mesomycoplasma hyopneumoniae (strain 232) (Mycoplasma hyopneumoniae)).